Reading from the N-terminus, the 147-residue chain is DNA base-flipping protein (147 aa).

Belongs to the MGMT family. ATL subfamily. As to quaternary structure, interacts with several proteins, including UvrA, UvrD and the three subunits of the RNA polymerase.

Functionally, involved in DNA damage recognition. Binds DNA containing O(6)-methylguanine and larger O(6)-alkylguanine adducts. Binds to the damaged base and flips the base out of the DNA duplex into an extrahelical conformation, which allows processing by repair proteins. Also affects the regulation of gene expression in response to alkylation. The protein is DNA base-flipping protein of Thermus thermophilus (strain ATCC 27634 / DSM 579 / HB8).